We begin with the raw amino-acid sequence, 75 residues long: UPF0352 protein VIBHAR_03027 (75 aa).

Belongs to the UPF0352 family.

This chain is UPF0352 protein VIBHAR_03027, found in Vibrio campbellii (strain ATCC BAA-1116).